The chain runs to 352 residues: UDP-3-O-acylglucosamine N-acyltransferase (352 aa).

The Proton acceptor role is filled by histidine 257.

Belongs to the transferase hexapeptide repeat family. LpxD subfamily. As to quaternary structure, homotrimer.

The catalysed reaction is a UDP-3-O-[(3R)-3-hydroxyacyl]-alpha-D-glucosamine + a (3R)-hydroxyacyl-[ACP] = a UDP-2-N,3-O-bis[(3R)-3-hydroxyacyl]-alpha-D-glucosamine + holo-[ACP] + H(+). The protein operates within bacterial outer membrane biogenesis; LPS lipid A biosynthesis. Its function is as follows. Catalyzes the N-acylation of UDP-3-O-acylglucosamine using 3-hydroxyacyl-ACP as the acyl donor. Is involved in the biosynthesis of lipid A, a phosphorylated glycolipid that anchors the lipopolysaccharide to the outer membrane of the cell. This chain is UDP-3-O-acylglucosamine N-acyltransferase, found in Methylobacterium sp. (strain 4-46).